We begin with the raw amino-acid sequence, 305 residues long: Putative glutamine amidotransferase MTH_191 (305 aa).

Residue Cys2 is part of the active site. Positions 2 to 305 (CGIAGVVYKD…SPGEVRVYEI (304 aa)) constitute a Glutamine amidotransferase type-2 domain.

The sequence is that of Putative glutamine amidotransferase MTH_191 from Methanothermobacter thermautotrophicus (strain ATCC 29096 / DSM 1053 / JCM 10044 / NBRC 100330 / Delta H) (Methanobacterium thermoautotrophicum).